The following is an 843-amino-acid chain: Protein P (843 aa).

A terminal protein domain (TP) region spans residues 1–177; sequence MPLSYQHFRK…FCGSPYSWEQ (177 aa). Residues 178–346 form a spacer region; sequence ELQHGRLVFQ…YCLSHIVNLL (169 aa). Disordered regions lie at residues 218–243 and 290–316; these read LKQS…SGSI and STSK…RSQS. Over residues 290-299 the composition is skewed to polar residues; it reads STSKRQSSSG. A polymerase/reverse transcriptase domain (RT) region spans residues 347–690; the sequence is EDWGPCTEHG…YLHLYPVARQ (344 aa). In terms of domain architecture, Reverse transcriptase spans 357 to 600; the sequence is EHNIRIPRTP…YSLNFMGYVI (244 aa). Residues D429, D551, and D552 each coordinate Mg(2+).

Belongs to the hepadnaviridae P protein family.

It carries out the reaction DNA(n) + a 2'-deoxyribonucleoside 5'-triphosphate = DNA(n+1) + diphosphate. The enzyme catalyses Endonucleolytic cleavage to 5'-phosphomonoester.. Activated by host HSP70 and HSP40 in vitro to be able to bind the epsilon loop of the pgRNA. Because deletion of the RNase H region renders the protein partly chaperone-independent, the chaperones may be needed indirectly to relieve occlusion of the RNA-binding site by this domain. Inhibited by several reverse-transcriptase inhibitors: Lamivudine, Adefovir and Entecavir. Multifunctional enzyme that converts the viral RNA genome into dsDNA in viral cytoplasmic capsids. This enzyme displays a DNA polymerase activity that can copy either DNA or RNA templates, and a ribonuclease H (RNase H) activity that cleaves the RNA strand of RNA-DNA heteroduplexes in a partially processive 3'- to 5'-endonucleasic mode. Neo-synthesized pregenomic RNA (pgRNA) are encapsidated together with the P protein, and reverse-transcribed inside the nucleocapsid. Initiation of reverse-transcription occurs first by binding the epsilon loop on the pgRNA genome, and is initiated by protein priming, thereby the 5'-end of (-)DNA is covalently linked to P protein. Partial (+)DNA is synthesized from the (-)DNA template and generates the relaxed circular DNA (RC-DNA) genome. After budding and infection, the RC-DNA migrates in the nucleus, and is converted into a plasmid-like covalently closed circular DNA (cccDNA). The activity of P protein does not seem to be necessary for cccDNA generation, and is presumably released from (+)DNA by host nuclear DNA repair machinery. This is Protein P from Homo sapiens (Human).